The sequence spans 61 residues: MSFLKKSLFLVLFLGLVSFSICEEEKRETEEEENEDEMNEESEEKRESPERPPGFTPFRVD.

The first 22 residues, 1-22 (MSFLKKSLFLVLFLGLVSFSIC), serve as a signal peptide directing secretion. Residues 23 to 50 (EEEKRETEEEENEDEMNEESEEKRESPE) constitute a propeptide that is removed on maturation. The interval 24–61 (EEKRETEEEENEDEMNEESEEKRESPERPPGFTPFRVD) is disordered. The span at 30–42 (EEEENEDEMNEES) shows a compositional bias: acidic residues.

This sequence belongs to the frog skin active peptide (FSAP) family. Bradykinin-related peptide subfamily. In terms of tissue distribution, expressed by the skin glands.

The protein localises to the secreted. Functionally, induces relaxation of rat smooth muscle from tail artery and contraction of that from ileum, urinary bladder and uterus. Binds to both bradykinin receptor B1 (BDKRB1) and B2 (BDKRB2). The protein is [Thr6, Val10, Asp11]-phyllokinin of Agalychnis spurrelli (Gliding leaf frog).